The sequence spans 373 residues: Quinolinate synthase (373 aa).

2 residues coordinate iminosuccinate: His46 and Ser63. Position 109 (Cys109) interacts with [4Fe-4S] cluster. Residues 142–144 (YMN) and Ser163 contribute to the iminosuccinate site. A [4Fe-4S] cluster-binding site is contributed by Cys232. Residues 258–260 (HPE) and Thr275 each bind iminosuccinate. Position 324 (Cys324) interacts with [4Fe-4S] cluster.

This sequence belongs to the quinolinate synthase family. Type 3 subfamily. The cofactor is [4Fe-4S] cluster.

Its subcellular location is the cytoplasm. It carries out the reaction iminosuccinate + dihydroxyacetone phosphate = quinolinate + phosphate + 2 H2O + H(+). It functions in the pathway cofactor biosynthesis; NAD(+) biosynthesis; quinolinate from iminoaspartate: step 1/1. Its function is as follows. Catalyzes the condensation of iminoaspartate with dihydroxyacetone phosphate to form quinolinate. The polypeptide is Quinolinate synthase (Acidobacterium capsulatum (strain ATCC 51196 / DSM 11244 / BCRC 80197 / JCM 7670 / NBRC 15755 / NCIMB 13165 / 161)).